The sequence spans 720 residues: Polyribonucleotide nucleotidyltransferase (720 aa).

2 residues coordinate Mg(2+): aspartate 487 and aspartate 493. The region spanning 554–613 (PRIETFKIPTDKIREVIGTGGKVIREIVEKTGAKVNIEDDGTVKVASSDGEAMKAAIKWI) is the KH domain. The S1 motif domain maps to 623–691 (GQIYDGTVVK…DRGKTRLSMK (69 aa)). The segment at 692–720 (AVDQTTGEDLEAKQKAEGGAEAPREAAGE) is disordered. A compositionally biased stretch (basic and acidic residues) spans 701-720 (LEAKQKAEGGAEAPREAAGE).

This sequence belongs to the polyribonucleotide nucleotidyltransferase family. Requires Mg(2+) as cofactor.

The protein resides in the cytoplasm. The enzyme catalyses RNA(n+1) + phosphate = RNA(n) + a ribonucleoside 5'-diphosphate. Functionally, involved in mRNA degradation. Catalyzes the phosphorolysis of single-stranded polyribonucleotides processively in the 3'- to 5'-direction. The chain is Polyribonucleotide nucleotidyltransferase from Bradyrhizobium sp. (strain BTAi1 / ATCC BAA-1182).